Reading from the N-terminus, the 212-residue chain is Imidazole glycerol phosphate synthase subunit HisH (212 aa).

The region spanning 3–212 (DIAIVDYGMG…LGNFVRWKPV (210 aa)) is the Glutamine amidotransferase type-1 domain. C82 serves as the catalytic Nucleophile. Catalysis depends on residues H191 and E193.

As to quaternary structure, heterodimer of HisH and HisF.

Its subcellular location is the cytoplasm. The enzyme catalyses 5-[(5-phospho-1-deoxy-D-ribulos-1-ylimino)methylamino]-1-(5-phospho-beta-D-ribosyl)imidazole-4-carboxamide + L-glutamine = D-erythro-1-(imidazol-4-yl)glycerol 3-phosphate + 5-amino-1-(5-phospho-beta-D-ribosyl)imidazole-4-carboxamide + L-glutamate + H(+). It carries out the reaction L-glutamine + H2O = L-glutamate + NH4(+). It functions in the pathway amino-acid biosynthesis; L-histidine biosynthesis; L-histidine from 5-phospho-alpha-D-ribose 1-diphosphate: step 5/9. Its function is as follows. IGPS catalyzes the conversion of PRFAR and glutamine to IGP, AICAR and glutamate. The HisH subunit catalyzes the hydrolysis of glutamine to glutamate and ammonia as part of the synthesis of IGP and AICAR. The resulting ammonia molecule is channeled to the active site of HisF. This is Imidazole glycerol phosphate synthase subunit HisH from Nitrosospira multiformis (strain ATCC 25196 / NCIMB 11849 / C 71).